Consider the following 296-residue polypeptide: Phosphatidylglycerol--prolipoprotein diacylglyceryl transferase (296 aa).

The next 3 helical transmembrane spans lie at 17-37, 59-79, and 97-117; these read LAVRWYGLMYLVGFIAAIVVG, MMFYGVLGTVLGGRLGYVLFY, and GGMSFHGGFLGVTLAMMLFAW. Arginine 142 is a binding site for a 1,2-diacyl-sn-glycero-3-phospho-(1'-sn-glycerol). Helical transmembrane passes span 230–250 and 257–277; these read MGAVSALFLIGYGLARFTVEF and FLGLLALGLSMGQWLSLPMIL.

Belongs to the Lgt family.

The protein localises to the cell inner membrane. It carries out the reaction L-cysteinyl-[prolipoprotein] + a 1,2-diacyl-sn-glycero-3-phospho-(1'-sn-glycerol) = an S-1,2-diacyl-sn-glyceryl-L-cysteinyl-[prolipoprotein] + sn-glycerol 1-phosphate + H(+). The protein operates within protein modification; lipoprotein biosynthesis (diacylglyceryl transfer). Its function is as follows. Catalyzes the transfer of the diacylglyceryl group from phosphatidylglycerol to the sulfhydryl group of the N-terminal cysteine of a prolipoprotein, the first step in the formation of mature lipoproteins. In Burkholderia lata (strain ATCC 17760 / DSM 23089 / LMG 22485 / NCIMB 9086 / R18194 / 383), this protein is Phosphatidylglycerol--prolipoprotein diacylglyceryl transferase.